The primary structure comprises 223 residues: Ribose-5-phosphate isomerase A (223 aa).

Residues 29 to 32 (TGST), 82 to 85 (DGAD), and 95 to 98 (KGGG) each bind substrate. The Proton acceptor role is filled by glutamate 104. Residue lysine 122 coordinates substrate.

Belongs to the ribose 5-phosphate isomerase family. In terms of assembly, homodimer.

The catalysed reaction is aldehydo-D-ribose 5-phosphate = D-ribulose 5-phosphate. Its pathway is carbohydrate degradation; pentose phosphate pathway; D-ribose 5-phosphate from D-ribulose 5-phosphate (non-oxidative stage): step 1/1. In terms of biological role, catalyzes the reversible conversion of ribose-5-phosphate to ribulose 5-phosphate. The protein is Ribose-5-phosphate isomerase A of Neisseria meningitidis serogroup C / serotype 2a (strain ATCC 700532 / DSM 15464 / FAM18).